The following is an 831-amino-acid chain: Heat shock 70 kDa protein 15 (831 aa).

Disordered regions lie at residues 502–579 (EEEV…KKKV) and 784–831 (IMTK…EGST). Positions 512-526 (DQSEETAKMDTDKAS) are enriched in basic and acidic residues. A phosphoserine mark is found at Ser533 and Ser536. Over residues 787 to 800 (KPKPAAKAEAPQAK) the composition is skewed to low complexity.

The protein belongs to the heat shock protein 70 (TC 1.A.33) family. HSP110/SSE subfamily.

It is found in the cytoplasm. Its subcellular location is the nucleus. In cooperation with other chaperones, Hsp70s are key components that facilitate folding of de novo synthesized proteins, assist translocation of precursor proteins into organelles, and are responsible for degradation of damaged protein under stress conditions. This Arabidopsis thaliana (Mouse-ear cress) protein is Heat shock 70 kDa protein 15 (HSP70-15).